Here is a 180-residue protein sequence, read N- to C-terminus: Adenine phosphoribosyltransferase (180 aa).

The protein belongs to the purine/pyrimidine phosphoribosyltransferase family. As to quaternary structure, homodimer.

It is found in the cytoplasm. It catalyses the reaction AMP + diphosphate = 5-phospho-alpha-D-ribose 1-diphosphate + adenine. It functions in the pathway purine metabolism; AMP biosynthesis via salvage pathway; AMP from adenine: step 1/1. Catalyzes a salvage reaction resulting in the formation of AMP, that is energically less costly than de novo synthesis. In Rhizobium meliloti (strain 1021) (Ensifer meliloti), this protein is Adenine phosphoribosyltransferase.